Here is a 168-residue protein sequence, read N- to C-terminus: Cyanate hydratase (168 aa).

Active-site residues include Arg94, Glu97, and Ser120.

The protein belongs to the cyanase family.

It catalyses the reaction cyanate + hydrogencarbonate + 3 H(+) = NH4(+) + 2 CO2. Functionally, catalyzes the reaction of cyanate with bicarbonate to produce ammonia and carbon dioxide. In Oryza sativa subsp. indica (Rice), this protein is Cyanate hydratase.